The sequence spans 702 residues: Cytolytic toxin-beta (702 aa).

The structural MACPF/CDC pore-forming domain stretch occupies residues 2-264 (PSDILVVAAL…EAPQLMADSS (263 aa)). Asparagine 94, asparagine 101, and asparagine 286 each carry an N-linked (GlcNAc...) asparagine glycan. The structural FAT domain stretch occupies residues 265-387 (TPILRKVRNT…DIIEEAKHKV (123 aa)). Residues 388 to 515 (VLSKSQMARE…PRIPPVETIQ (128 aa)) are thioredoxin (THX) domain. Positions 504–702 (SNPRIPPVET…ANGQIKLKGE (199 aa)) constitute a B30.2/SPRY domain.

The protein belongs to the SNTX/VTX toxin family. In terms of assembly, heterodimer of alpha and beta subunits; non-covalently linked. Also associates into tetramers or even higher aggregates. In terms of processing, intrachain disulfide bonds may be present in the heterodimer. In terms of tissue distribution, expressed by the venom gland.

The protein localises to the secreted. This heterodimer induces potent hemolytic activities (when tested on rabbit erythrocytes, EC(50)=25-56 ng/mL) due to its ability to form pores in the cell membrane. The pore may be composed of 10 alpha/beta heterodimers. The toxin shows cardiovascular effects that include a vasorelaxant action that may involve the L-arginine-nitric oxid synthase pathway. In addition, it displays edema-inducing activities, increases vascular permeability. It also shows myotoxic activities and interferes irreversibly with neuromuscular function. It also induces irreversible platelet aggregation in rabbit or rat (but not in human or mouse) whole blood. In addition, it has been observed to increase spontaneous quantal acetylcholine release from isolated frog cutaneous pectoris motor endings. The sequence is that of Cytolytic toxin-beta from Scorpaena plumieri (Spotted scorpionfish).